Reading from the N-terminus, the 171-residue chain is Translation initiation factor IF-3 (171 aa).

The protein belongs to the IF-3 family. Monomer.

Its subcellular location is the cytoplasm. In terms of biological role, IF-3 binds to the 30S ribosomal subunit and shifts the equilibrium between 70S ribosomes and their 50S and 30S subunits in favor of the free subunits, thus enhancing the availability of 30S subunits on which protein synthesis initiation begins. In Halalkalibacterium halodurans (strain ATCC BAA-125 / DSM 18197 / FERM 7344 / JCM 9153 / C-125) (Bacillus halodurans), this protein is Translation initiation factor IF-3.